The primary structure comprises 251 residues: Zinc import ATP-binding protein ZnuC (251 aa).

Residues 5–220 (VSLENVSVSF…PEFISMFGPR (216 aa)) enclose the ABC transporter domain. Residue 37 to 44 (GPNGAGKS) participates in ATP binding.

Belongs to the ABC transporter superfamily. Zinc importer (TC 3.A.1.15.5) family. The complex is composed of two ATP-binding proteins (ZnuC), two transmembrane proteins (ZnuB) and a solute-binding protein (ZnuA).

The protein localises to the cell inner membrane. The enzyme catalyses Zn(2+)(out) + ATP(in) + H2O(in) = Zn(2+)(in) + ADP(in) + phosphate(in) + H(+)(in). Part of the ABC transporter complex ZnuABC involved in zinc import. Responsible for energy coupling to the transport system. This Salmonella choleraesuis (strain SC-B67) protein is Zinc import ATP-binding protein ZnuC.